A 177-amino-acid polypeptide reads, in one-letter code: Anditomin synthesis protein L (177 aa).

A run of 2 helical transmembrane segments spans residues 54 to 74 and 117 to 137; these read VVNS…PFIM and IVNF…YMVF. N165 carries N-linked (GlcNAc...) asparagine glycosylation.

The protein resides in the membrane. Its pathway is secondary metabolite biosynthesis; terpenoid biosynthesis. In terms of biological role, part of the gene cluster that mediates the biosynthesis of anditomin, a fungal meroterpenoid. The first step of the pathway is the synthesis of 3,5-dimethylorsellinic acid (DMOA) by the polyketide synthase andM. DMOA is then converted to the phthalide compound 5,7-dihydroxy-4,6-dimethylphthalide (DHDMP) by the cytochrome P450 monooxygenase andK, which is further prenylated by the prenyltransferase andD to yield farnesyl-DHDMP. Further epoxidation by the FAD-dependent monooxygenase andE leads to epoxyfarnesyl-DHDMP. The next step involves the terpene cyclase andB that converts epoxyfarnesyl-DHDMP into preandiloid A through opening of the epoxide ring followed by the cyclization of the farnesyl moiety. Preandiloid A is in turn oxidized at the C-3 hydroxyl group to yield preandiloid B by the dehydrogenase andC. The dioxygenase andA is solely responsible for the dehydrogenation of preandiloid B leading to the enone preandiloid C, as well as for the intriguing structural rearrangement to generate the bicyclo[2.2.2]octane core, transforming preandiloid C into andiconin. FAD-binding monooxygenase andJ then produces andilesin D which is reduced by dehydrogenase andI to yield andilesin A. Action of acetyltransferase andG followed by a spontaneous acetate elimination leads then to andilesin B, which is in turn substrate of the short chain dehydrogenase andH to yield andilesin C. Finally, the dioxygenase andF catalyzes the transformation of andilesin C to anditomin. The exact role of andL within the anditomin biosynthetic pathway has not been identified yet. The polypeptide is Anditomin synthesis protein L (Emericella variicolor (Aspergillus stellatus)).